The following is a 121-amino-acid chain: uncharacterized protein (121 aa).

Residues 43–86 form the CHCH domain; it reads LKECSSHVAAFADCSKDKYISVVWECRELQQLMKNCLVEYTTSE. 2 short sequence motifs (cx9C motif) span residues 46-56 and 68-78; these read CSSHVAAFADC and CRELQQLMKNC. 2 cysteine pairs are disulfide-bonded: C46–C78 and C56–C68.

It belongs to the CMC family.

This is an uncharacterized protein from Dictyostelium discoideum (Social amoeba).